Here is a 157-residue protein sequence, read N- to C-terminus: Urease accessory protein UreE (157 aa).

Belongs to the UreE family.

It localises to the cytoplasm. Involved in urease metallocenter assembly. Binds nickel. Probably functions as a nickel donor during metallocenter assembly. This Corynebacterium glutamicum (strain ATCC 13032 / DSM 20300 / JCM 1318 / BCRC 11384 / CCUG 27702 / LMG 3730 / NBRC 12168 / NCIMB 10025 / NRRL B-2784 / 534) protein is Urease accessory protein UreE.